Here is a 202-residue protein sequence, read N- to C-terminus: Small ribosomal subunit protein uS4c (202 aa).

Residues 90 to 154 (MRLDNILFRL…SQSIITKNLN (65 aa)) enclose the S4 RNA-binding domain.

This sequence belongs to the universal ribosomal protein uS4 family. As to quaternary structure, part of the 30S ribosomal subunit. Contacts protein S5. The interaction surface between S4 and S5 is involved in control of translational fidelity.

Its subcellular location is the plastid. It is found in the chloroplast. In terms of biological role, one of the primary rRNA binding proteins, it binds directly to 16S rRNA where it nucleates assembly of the body of the 30S subunit. Its function is as follows. With S5 and S12 plays an important role in translational accuracy. This Monoclea forsteri (Liverwort) protein is Small ribosomal subunit protein uS4c (rps4).